Consider the following 157-residue polypeptide: Endoribonuclease YbeY (157 aa).

His-114, His-118, and His-124 together coordinate Zn(2+).

It belongs to the endoribonuclease YbeY family. The cofactor is Zn(2+).

It is found in the cytoplasm. In terms of biological role, single strand-specific metallo-endoribonuclease involved in late-stage 70S ribosome quality control and in maturation of the 3' terminus of the 16S rRNA. The sequence is that of Endoribonuclease YbeY from Yersinia pseudotuberculosis serotype O:3 (strain YPIII).